The sequence spans 610 residues: MPFDLLAERKRWNAGYESIDTSSQKLTEVVTPITVTWENIEVKTRKKLFSKKQKQLLNRVSGIAKPGEMVALMGASGAGKTTLMNVLMCRNMKGLEKNGTVKVNGTKIGKEISLISGFAQQQEIFIPTLTVDEYLMIQARLRMKANKHTRRERVDEIIEMLRLQNCRDLKIGTPGLVKGISGGEARRLTFACELLSNPSLLFADEPTSGLDSFMAASVVQILKNLANSGRTLIHQPTAELFFQFDKIIFLSMGKTAFMGTPHESVKFFADCGHPIPKLFNPPEWIQSKLSVIPNNETKSRETIGKIIEFYEKSIIHQKSIVEIRVIATTELPPYIENPGFFAETGALLKRACLDVIRSPAQMRMKLIQKVVMGLFIGSLYWQQPLDPRGVRNTNSALYFLIAELTFSTMFGIMTFMEHELPLIAREYHDGLFYVISYYISRFLSYLPLFTIDGALMIVISYWMIGLNSTWQQVAKSILISVLVEQSATSCGLFLACLFETTSLAIAFAVPASGLFALLSGLYGNTNNFPVYIRWMQWTSWCRYGFEGLVVNQWSQVDNPKWDPFYRELILKQFSFNKDNYQLDVIGLCSIVIFFYLAGYIALFIRIRLSR.

In terms of domain architecture, ABC transporter spans 42–277 (VKTRKKLFSK…FADCGHPIPK (236 aa)). 74 to 81 (GASGAGKT) contributes to the ATP binding site. Helical transmembrane passes span 396–416 (ALYFLIAELTFSTMFGIMTFM), 446–466 (LPLFTIDGALMIVISYWMIGL), 477–497 (ILISVLVEQSATSCGLFLACL), 503–523 (LAIAFAVPASGLFALLSGLYG), and 584–604 (VIGLCSIVIFFYLAGYIALFI).

The protein belongs to the ABC transporter superfamily. ABCG family. Eye pigment precursor importer (TC 3.A.1.204) subfamily.

Its subcellular location is the membrane. In terms of biological role, required for efficient RNA interference (RNAi) of pop-1 indicating a role in the germline development. The protein is ABC transporter ATP-binding protein/permease wht-3 (wht-3) of Caenorhabditis elegans.